Here is a 338-residue protein sequence, read N- to C-terminus: uncharacterized protein (338 aa).

Residues 1 to 20 form a disordered region; that stretch reads MYNNNQNHHNNDNNMNKDEP. Positions 9–20 are enriched in basic and acidic residues; the sequence is HNNDNNMNKDEP. Asn37, Asn83, Asn97, Asn105, Asn114, and Asn122 each carry an N-linked (GlcNAc...) asparagine glycan. The disordered stretch occupies residues 55–92; it reads VNSGNNNNNNNNNNNNNNNNNNNNNNNNNDSIVINMDT. A compositionally biased stretch (low complexity) spans 59–92; sequence NNNNNNNNNNNNNNNNNNNNNNNNNDSIVINMDT. Helical transmembrane passes span 148-168, 178-198, and 202-222; these read YKKF…IVLI, FHAY…FLLI, and ILSI…FLKV. Residues Asn229, Asn240, Asn286, Asn302, Asn317, and Asn322 are each glycosylated (N-linked (GlcNAc...) asparagine). Disordered regions lie at residues 279 to 303 and 316 to 338; these read SNLN…NSNS and LNSS…TNEE. Over residues 280 to 294 the composition is skewed to low complexity; the sequence is NLNRNNNNSNNVNNN. A compositionally biased stretch (low complexity) spans 316–327; it reads LNSSGSNSSIYS. Residues 328–338 are compositionally biased toward polar residues; the sequence is DVQNDIGTNEE.

Its subcellular location is the membrane. This is an uncharacterized protein from Dictyostelium discoideum (Social amoeba).